The sequence spans 580 residues: Arginine--tRNA ligase (580 aa).

Positions 127-137 (PNLAKEMHVGH) match the 'HIGH' region motif.

Belongs to the class-I aminoacyl-tRNA synthetase family. In terms of assembly, monomer.

The protein localises to the cytoplasm. It carries out the reaction tRNA(Arg) + L-arginine + ATP = L-arginyl-tRNA(Arg) + AMP + diphosphate. This chain is Arginine--tRNA ligase, found in Idiomarina loihiensis (strain ATCC BAA-735 / DSM 15497 / L2-TR).